A 274-amino-acid chain; its full sequence is Diaminopimelate epimerase (274 aa).

3 residues coordinate substrate: asparagine 11, glutamine 44, and asparagine 64. Cysteine 73 functions as the Proton donor in the catalytic mechanism. Residues 74–75 (GN), asparagine 157, asparagine 190, and 208–209 (ER) contribute to the substrate site. Cysteine 217 acts as the Proton acceptor in catalysis. 218 to 219 (GS) contacts substrate.

The protein belongs to the diaminopimelate epimerase family. Homodimer.

The protein resides in the cytoplasm. It carries out the reaction (2S,6S)-2,6-diaminopimelate = meso-2,6-diaminopimelate. It participates in amino-acid biosynthesis; L-lysine biosynthesis via DAP pathway; DL-2,6-diaminopimelate from LL-2,6-diaminopimelate: step 1/1. In terms of biological role, catalyzes the stereoinversion of LL-2,6-diaminopimelate (L,L-DAP) to meso-diaminopimelate (meso-DAP), a precursor of L-lysine and an essential component of the bacterial peptidoglycan. In Pectobacterium atrosepticum (strain SCRI 1043 / ATCC BAA-672) (Erwinia carotovora subsp. atroseptica), this protein is Diaminopimelate epimerase.